The following is a 57-amino-acid chain: Andropin (57 aa).

Positions 1 to 23 are cleaved as a signal peptide; sequence MKYFVVLVVLALILAITVGPSDA.

It belongs to the andropin family. As to expression, ejaculatory duct of adult males.

It localises to the secreted. In terms of biological role, male-specific peptide with moderate activity against Gram-positive bacteria. The protein is Andropin (Anp) of Drosophila mauritiana (Fruit fly).